The chain runs to 1620 residues: MLFKNEDSGNGVYCFTYNNFSDVTISDILNIRNDNKNNDNEDNKQDDEEKNDEDDNKSNLLLEENEENKRQGDKPFEDLSLFSFKNNEQCYDNIKMQQAILNSSYEKNVKNIVKIVYHEDCKLLYENTDIHVELPSIVYGRNRNKNNDVVNKCNQYNDDDYTNKCNQYNDDDYTNKCNQYNDDDYTNKCNQYNDNDYTNKCNQYNDNDYTNKCNQYNDVRKITNLKYFINHNWKNINLINEKLFLKNLKELEEILNYNFLHICKNKCKQYNKKRKNERHFSYHDNFLSHYIIYKKNKFIKHNKNEHINGNHYDAHESTNTYDEEKTREKHNNKNNNMKYCLNKYPYDNVNAPLNLSCPWYEKKIENIYCLNIPGYKYKYKYICPSMSKMNDEKIKELYIPKGHILFNSKFESGNLKYVIKEENDKEVYSLFLNPDIRMNEKKNQWFYFSASYVPNEYYTNELYKMKMCNKDINHIGDNMNVVYNYMNGTGNNINNIVNNLDSTVNYMNSTGNNINNIVNNLDSTVNYMNSTGNNINNIVNNLDSTVNYMNSTGNNINNIVNNLDSTVNYMNSTGNYLNRKNNNHLSYTNWSGQRCMNQYLNDINNDEIDTNLDGNRKYSLDACDKFTVRNVRKLEKPFTVRFKIENMAKPFFLYKYGHSPLSFSECKYKIENIQWERNSYDIKYIKNSSCKHYNIKKNSMEYYNYNTYTLEFSYDFTYAYDTVYFASSYPYTYSYLSEYLCLIRNLLKDHPTINYIEERLCKTSCGFDCPVLCITNYDRMEEYNKEELKESVEKKQNIVEANNTCDEKLVDGMDISSNAIRKEIKKKGYILTSKKLDKNRVVNNLFVDMKNGCTRGCASGCTNGCANGYTNGYTNRYTKGCTKGCTNEYSNDNMCKECLDIKNICYQEEKEKCDIIKYNDDKDYSHNCCYEECYNMKREKKKFVCCLSDKCNSFLNEQIKRRRSIMGWNILRNRIKCCKNKMYTSNDFMKTFDSLLKKVYVCKGENKKNNGTKIIKRFEEKYDNNLLFKRKDEKRSLSASPKKKKKKKKKIIVLTARVHPGETNSSYAIHGFIAFIISNNIYAHILREKFIFIIIPMLNIDGVILGNNRYCYNGFDLNRQWSNPIGYIHPTIYSAKLLMKNISENNKIIFFCDFHSHSRKYNCFIFGNEGSYNYVKNKKMCEVFPEIYSHTLPWFALVDTVYKADNENKGSARLISGKEFSLDCSYTFEISLFGIQIRKDFNIMYDEKKDIFYVQNYFEGYQNGDDNIKGGDNIKGGDNIKGDDNINGDDNIKGGDNIKGDDNIKRDDNFQRDDNFQRDDNFQRGDNFHRGDNFHRDDIYDKMNKHYINNNYYYDKNSYDFLYFDENLLFMTGVSFGICLFKFINFLSYHKSSICRRTCEEKEKEHISTETCGILCAKNNKDDEEKCNESKKQNHDAFKTGNSLEFDKGEEHLLSDTHRMVNTFLCNSMNKSKNKNKNKKGYNYILNKYGFIKLKSSKKHIEEVKRIRKLKKKKYMVKEVYELGRKIKQNKYYHNYPFGLYKVNINDVIRILNKINMDDPNGKYKGPGFNNSVDMKKKIKNKNESKTEKKSKTENKSKSKSKNKSKSKNKSKRKKVIVIL.

At 1-1367 (MLFKNEDSGN…SYDFLYFDEN (1367 aa)) the chain is on the extracellular side. N19 carries an N-linked (GlcNAc...) asparagine glycan. Residues 32–74 (RNDNKNNDNEDNKQDDEEKNDEDDNKSNLLLEENEENKRQGDK) form a disordered region. Over residues 33–43 (NDNKNNDNEDN) the composition is skewed to basic and acidic residues. The span at 44–55 (KQDDEEKNDEDD) shows a compositional bias: acidic residues. N56 and N102 each carry an N-linked (GlcNAc...) asparagine glycan. Residues 309–328 (GNHYDAHESTNTYDEEKTRE) form a disordered region. N354, N487, N508, N529, N550, N571, N589, N687, N802, and N1010 each carry an N-linked (GlcNAc...) asparagine glycan. The possible malaria epitope stretch occupies residues 497-559 (VNNLDSTVNY…NSTGNNINNI (63 aa)). A Peptidase M14 domain is found at 1004-1261 (GENKKNNGTK…FYVQNYFEGY (258 aa)). H1059 and E1062 together coordinate Zn(2+). N1064 and N1141 each carry an N-linked (GlcNAc...) asparagine glycan. A Zn(2+)-binding site is contributed by H1155. The active-site Proton donor/acceptor is the E1229. A disordered region spans residues 1279 to 1329 (NIKGDDNINGDDNIKGGDNIKGDDNIKRDDNFQRDDNFQRDDNFQRGDNFH). The chain crosses the membrane as a helical span at residues 1368–1388 (LLFMTGVSFGICLFKFINFLS). Residues 1389–1620 (YHKSSICRRT…SKRKKVIVIL (232 aa)) lie on the Cytoplasmic side of the membrane. The segment at 1560-1620 (PNGKYKGPGF…SKRKKVIVIL (61 aa)) is disordered. Over residues 1581–1597 (NKNESKTEKKSKTENKS) the composition is skewed to basic and acidic residues. Residues 1598–1620 (KSKSKNKSKSKNKSKRKKVIVIL) are compositionally biased toward basic residues.

The protein belongs to the peptidase M14 family. Zn(2+) serves as cofactor.

It localises to the membrane. In Plasmodium falciparum (isolate 3D7), this protein is Putative zinc carboxypeptidase.